The chain runs to 451 residues: Protein FAM117A (451 aa).

Over residues 1-25 (MSGAAAGGRGGGSWGPGRGGAGGLR) the composition is skewed to gly residues. 2 disordered regions span residues 1 to 83 (MSGA…RPQP) and 164 to 183 (RTKLSRSGKEKERSCPVQGD). Phosphoserine is present on residues serine 29 and serine 67. A coiled-coil region spans residues 149–175 (TDHRKEITKLKQQLQRTKLSRSGKEKE). Phosphoserine is present on residues serine 193 and serine 213. The disordered stretch occupies residues 242 to 293 (DGHRAPAPPQNSSCDHSLLLEPGNLTSSPSVPLASPQPPSQASREEHQGATE). 2 positions are modified to phosphoserine: serine 318 and serine 326. Threonine 353 is subject to Phosphothreonine. Residues 403–451 (SPGSPLPTASPRAPRKGPEASKASSLPSEPWQRSPPSEESVLFQSSLVV) form a disordered region. 2 positions are modified to phosphoserine: serine 412 and serine 426. A compositionally biased stretch (polar residues) spans 436–451 (SPPSEESVLFQSSLVV).

Belongs to the FAM117 family.

This is Protein FAM117A (Fam117a) from Mus musculus (Mouse).